The following is a 369-amino-acid chain: Alanine racemase (369 aa).

The Proton acceptor; specific for D-alanine role is filled by lysine 35. Lysine 35 carries the post-translational modification N6-(pyridoxal phosphate)lysine. Arginine 130 serves as a coordination point for substrate. The Proton acceptor; specific for L-alanine role is filled by tyrosine 257. Substrate is bound at residue methionine 305.

It belongs to the alanine racemase family. It depends on pyridoxal 5'-phosphate as a cofactor.

It catalyses the reaction L-alanine = D-alanine. The protein operates within amino-acid biosynthesis; D-alanine biosynthesis; D-alanine from L-alanine: step 1/1. Its function is as follows. Catalyzes the interconversion of L-alanine and D-alanine. May also act on other amino acids. This Paracidovorax citrulli (strain AAC00-1) (Acidovorax citrulli) protein is Alanine racemase (alr).